We begin with the raw amino-acid sequence, 342 residues long: Phosphate acyltransferase (342 aa).

The protein belongs to the PlsX family. Homodimer. Probably interacts with PlsY.

Its subcellular location is the cytoplasm. It catalyses the reaction a fatty acyl-[ACP] + phosphate = an acyl phosphate + holo-[ACP]. The protein operates within lipid metabolism; phospholipid metabolism. Catalyzes the reversible formation of acyl-phosphate (acyl-PO(4)) from acyl-[acyl-carrier-protein] (acyl-ACP). This enzyme utilizes acyl-ACP as fatty acyl donor, but not acyl-CoA. This is Phosphate acyltransferase from Shewanella sediminis (strain HAW-EB3).